A 117-amino-acid chain; its full sequence is Large ribosomal subunit protein uL18 (117 aa).

Belongs to the universal ribosomal protein uL18 family. Part of the 50S ribosomal subunit; part of the 5S rRNA/L5/L18/L25 subcomplex. Contacts the 5S and 23S rRNAs.

Functionally, this is one of the proteins that bind and probably mediate the attachment of the 5S RNA into the large ribosomal subunit, where it forms part of the central protuberance. This chain is Large ribosomal subunit protein uL18, found in Leuconostoc citreum (strain KM20).